A 359-amino-acid polypeptide reads, in one-letter code: Peptide chain release factor 1 (359 aa).

Gln233 bears the N5-methylglutamine mark.

It belongs to the prokaryotic/mitochondrial release factor family. Methylated by PrmC. Methylation increases the termination efficiency of RF1.

The protein localises to the cytoplasm. Its function is as follows. Peptide chain release factor 1 directs the termination of translation in response to the peptide chain termination codons UAG and UAA. The polypeptide is Peptide chain release factor 1 (Cytophaga hutchinsonii (strain ATCC 33406 / DSM 1761 / CIP 103989 / NBRC 15051 / NCIMB 9469 / D465)).